A 215-amino-acid polypeptide reads, in one-letter code: Pyridoxine/pyridoxamine 5'-phosphate oxidase (215 aa).

Substrate is bound by residues 9–12 (RKEY) and Lys67. Residues 62–67 (RIVLLK), 77–78 (YT), Lys84, and Gln106 contribute to the FMN site. Positions 124, 128, and 132 each coordinate substrate. FMN contacts are provided by residues 141-142 (QS) and Trp187. 193–195 (RLH) is a substrate binding site. Arg197 contacts FMN.

This sequence belongs to the pyridoxamine 5'-phosphate oxidase family. Homodimer. It depends on FMN as a cofactor.

The enzyme catalyses pyridoxamine 5'-phosphate + O2 + H2O = pyridoxal 5'-phosphate + H2O2 + NH4(+). It catalyses the reaction pyridoxine 5'-phosphate + O2 = pyridoxal 5'-phosphate + H2O2. It functions in the pathway cofactor metabolism; pyridoxal 5'-phosphate salvage; pyridoxal 5'-phosphate from pyridoxamine 5'-phosphate: step 1/1. Its pathway is cofactor metabolism; pyridoxal 5'-phosphate salvage; pyridoxal 5'-phosphate from pyridoxine 5'-phosphate: step 1/1. Catalyzes the oxidation of either pyridoxine 5'-phosphate (PNP) or pyridoxamine 5'-phosphate (PMP) into pyridoxal 5'-phosphate (PLP). The chain is Pyridoxine/pyridoxamine 5'-phosphate oxidase from Cytophaga hutchinsonii (strain ATCC 33406 / DSM 1761 / CIP 103989 / NBRC 15051 / NCIMB 9469 / D465).